We begin with the raw amino-acid sequence, 212 residues long: Large ribosomal subunit protein uL4 (212 aa).

Polar residues predominate over residues 43–52; it reads NNRQGTASTK. Residues 43–77 are disordered; sequence NNRQGTASTKTRSEVRGGGRKPWRQKGTGRARAGS. The segment covering 60–71 has biased composition (basic residues); sequence GGRKPWRQKGTG.

Belongs to the universal ribosomal protein uL4 family. Part of the 50S ribosomal subunit.

Functionally, one of the primary rRNA binding proteins, this protein initially binds near the 5'-end of the 23S rRNA. It is important during the early stages of 50S assembly. It makes multiple contacts with different domains of the 23S rRNA in the assembled 50S subunit and ribosome. In terms of biological role, forms part of the polypeptide exit tunnel. This is Large ribosomal subunit protein uL4 from Trichodesmium erythraeum (strain IMS101).